Reading from the N-terminus, the 347-residue chain is 4-hydroxy-2-oxovalerate aldolase 4 (347 aa).

Residues 9–259 (ITIVDTTLRD…DTGVDLFPLI (251 aa)) enclose the Pyruvate carboxyltransferase domain. Substrate is bound by residues 17 to 18 (RD), serine 171, and histidine 198. A Mn(2+)-binding site is contributed by aspartate 18. 2 residues coordinate Mn(2+): histidine 198 and histidine 200. Tyrosine 289 is a binding site for substrate.

It belongs to the 4-hydroxy-2-oxovalerate aldolase family.

It catalyses the reaction (S)-4-hydroxy-2-oxopentanoate = acetaldehyde + pyruvate. The polypeptide is 4-hydroxy-2-oxovalerate aldolase 4 (Rhodococcus opacus (strain B4)).